Consider the following 423-residue polypeptide: Putative galacturan 1,4-alpha-galacturonidase C (423 aa).

Residues M1–A20 form the signal peptide. N-linked (GlcNAc...) asparagine glycosylation is found at N92, N98, N118, N156, N179, and N191. 2 PbH1 repeats span residues A215–P236 and S238–S258. D229 functions as the Proton donor in the catalytic mechanism. C231 and C248 are oxidised to a cystine. N-linked (GlcNAc...) asparagine glycans are attached at residues N245, N344, and N362. C379 and C385 are disulfide-bonded. N-linked (GlcNAc...) asparagine glycosylation occurs at N400.

It belongs to the glycosyl hydrolase 28 family.

It is found in the secreted. The catalysed reaction is [(1-&gt;4)-alpha-D-galacturonosyl](n) + H2O = alpha-D-galacturonate + [(1-&gt;4)-alpha-D-galacturonosyl](n-1). Its function is as follows. Specific in hydrolyzing the terminal glycosidic bond of polygalacturonic acid and oligogalacturonates. This is Putative galacturan 1,4-alpha-galacturonidase C (rgxC) from Aspergillus niger (strain ATCC MYA-4892 / CBS 513.88 / FGSC A1513).